A 299-amino-acid polypeptide reads, in one-letter code: Protoheme IX farnesyltransferase (299 aa).

9 helical membrane passes run 26 to 46, 53 to 73, 94 to 114, 121 to 141, 149 to 169, 175 to 195, 217 to 239, 243 to 265, and 277 to 297; these read VNALIVFCAVIGMFLAVPDGL, FAATVGIACVAGAAAAMNCLI, LHSVEVLVFAGVLGGFGLSVL, LTMWLTLATFVGYAVIYTLLL, IVIGGASGAMPPVLGWAAVSG, ALLLFLIIFAWTPPHFWSLAL, YTRLSVLLYTCALFGVTLLPFAI, GWIYLVAAVTLGLRFVHYAWRLL, and FRFSIVYLSLLFAALLADHYL.

It belongs to the UbiA prenyltransferase family. Protoheme IX farnesyltransferase subfamily.

It is found in the cell inner membrane. The enzyme catalyses heme b + (2E,6E)-farnesyl diphosphate + H2O = Fe(II)-heme o + diphosphate. It functions in the pathway porphyrin-containing compound metabolism; heme O biosynthesis; heme O from protoheme: step 1/1. In terms of biological role, converts heme B (protoheme IX) to heme O by substitution of the vinyl group on carbon 2 of heme B porphyrin ring with a hydroxyethyl farnesyl side group. This Azoarcus sp. (strain BH72) protein is Protoheme IX farnesyltransferase.